A 644-amino-acid polypeptide reads, in one-letter code: MAEAAGEAGASERDPDAVRARRRLRVLSGHLLGRPQEAPSTNECKARRAASAAGASPAASPAAPESGTIPKKRQELMKWNGWGYNDSKFLLNKKGQVELTGKRYPLSGLALPTLKDWIQNTLGVNLEHKTTSKPSINPSEAPPSIVNEDFLQELKEAHISYSQDADDRVFRAHGHCLHEIFLLREGMFERIPDIVVWPTCHDDVVKIVNLACKYNLCIIPIGGGTSVSYGLMCPADETRTIISLDTSQMNRILWVDENNLTAHVEAGITGQDLERQLKESGYCTGHEPDSLEFSIVGGWISTRASGMKKNVYGNIEDLVVHMKMVTPRGVIEKSSQGPRMSTGPDIHHFIMGSEGTLGVITEATIKIRPTPEYQKYGSVAFPNFEQGVACLREIAKQRCAPASIRLMDNQQFQFGHALKPQVSSIFTSFLDGFKKFYITKFKGFDPNQISVATLLFEGDREKVLQHEKQVYDIAAKFGGLAAGEDNGQRGYLLTYVIAYMRDLGLEYYVVGESFETSAPWDRVIDLCRNVKERIRRECKERGVQFAPLSTCRVTQTYDAGACIYFYFAFNYRGISDPLTVFEQTEAAARDEILANGGSLSHHHGVGKLRKQWLKESISDVGFGMLKSVKDYVDPSNIFGNRNLL.

The transit peptide at 1–44 directs the protein to the peroxisome; it reads MAEAAGEAGASERDPDAVRARRRLRVLSGHLLGRPQEAPSTNEC. Residues 1–70 are disordered; it reads MAEAAGEAGA…PAAPESGTIP (70 aa). The segment covering 10–19 has biased composition (basic and acidic residues); the sequence is ASERDPDAVR. Residues 49 to 64 show a composition bias toward low complexity; the sequence is AASAAGASPAASPAAP. Residues Ser-51 and Ser-56 each carry the phosphoserine modification. Lys-88 carries the post-translational modification N6-acetyllysine. Residues 188–370 form the FAD-binding PCMH-type domain; sequence FERIPDIVVW…TEATIKIRPT (183 aa). FAD contacts are provided by residues 220–226, 289–295, and 302–305; these read PIGGGTS, DSLEFSI, and TRAS. Lys-333 is subject to N6-acetyllysine. 354–360 provides a ligand contact to FAD; that stretch reads EGTLGVI. Arg-501 serves as a coordination point for substrate. The active-site Proton donor/acceptor is the Tyr-564. Important for enzyme activity stretches follow at residues 601–603 and 640–644; these read HHH and NRNLL.

The protein belongs to the FAD-binding oxidoreductase/transferase type 4 family. As to quaternary structure, homodimer. It depends on FAD as a cofactor.

It is found in the peroxisome membrane. The protein localises to the peroxisome. It catalyses the reaction a long chain fatty alcohol + a 1-acylglycerone 3-phosphate = a 1-O-alkylglycerone 3-phosphate + a long-chain fatty acid + H(+). The enzyme catalyses hexadecan-1-ol + 1-hexadecanoylglycerone 3-phosphate = 1-O-hexadecylglycerone 3-phosphate + hexadecanoate + H(+). It carries out the reaction 1-hexadecanoylglycerone 3-phosphate + a long-chain fatty acid = a 1-acylglycerone 3-phosphate + hexadecanoate. It participates in glycerolipid metabolism; ether lipid biosynthesis. With respect to regulation, inhibited by divalent cation Mg(2+). In terms of biological role, catalyzes the exchange of the acyl chain in acyl-dihydroxyacetonephosphate (acyl-DHAP) for a long chain fatty alcohol, yielding the first ether linked intermediate, i.e. alkyl-dihydroxyacetonephosphate (alkyl-DHAP), in the pathway of ether lipid biosynthesis. This is Alkyldihydroxyacetonephosphate synthase, peroxisomal (Agps) from Rattus norvegicus (Rat).